Here is a 78-residue protein sequence, read N- to C-terminus: Large ribosomal subunit protein bL28 (78 aa).

It belongs to the bacterial ribosomal protein bL28 family.

This is Large ribosomal subunit protein bL28 from Haemophilus influenzae (strain 86-028NP).